The sequence spans 212 residues: Thymidine kinase (212 aa).

ATP is bound by residues 16-23 (GPMFSGKS) and 99-102 (DEAQ). Residue Glu-100 is the Proton acceptor of the active site.

This sequence belongs to the thymidine kinase family. Homotetramer.

The protein resides in the cytoplasm. It carries out the reaction thymidine + ATP = dTMP + ADP + H(+). This chain is Thymidine kinase, found in Deinococcus radiodurans (strain ATCC 13939 / DSM 20539 / JCM 16871 / CCUG 27074 / LMG 4051 / NBRC 15346 / NCIMB 9279 / VKM B-1422 / R1).